Reading from the N-terminus, the 506-residue chain is Lysine--tRNA ligase (506 aa).

The Mg(2+) site is built by E416 and E423.

It belongs to the class-II aminoacyl-tRNA synthetase family. Homodimer. Requires Mg(2+) as cofactor.

Its subcellular location is the cytoplasm. It catalyses the reaction tRNA(Lys) + L-lysine + ATP = L-lysyl-tRNA(Lys) + AMP + diphosphate. This Xylella fastidiosa (strain 9a5c) protein is Lysine--tRNA ligase (lysS).